Reading from the N-terminus, the 79-residue chain is Small ribosomal subunit protein bS16 (79 aa).

Belongs to the bacterial ribosomal protein bS16 family.

The chain is Small ribosomal subunit protein bS16 from Oleidesulfovibrio alaskensis (strain ATCC BAA-1058 / DSM 17464 / G20) (Desulfovibrio alaskensis).